A 305-amino-acid polypeptide reads, in one-letter code: UPF0282 protein Pisl_0021 (305 aa).

Belongs to the UPF0282 family.

This Pyrobaculum islandicum (strain DSM 4184 / JCM 9189 / GEO3) protein is UPF0282 protein Pisl_0021.